The primary structure comprises 74 residues: Putative ribosome-binding protein YbzG (74 aa).

The polypeptide is Putative ribosome-binding protein YbzG (ybzG) (Bacillus subtilis (strain 168)).